A 346-amino-acid chain; its full sequence is Lysyl aminopeptidase (346 aa).

H63 and D177 together coordinate Zn(2+). The active-site Proton acceptor is E207. 3 residues coordinate Zn(2+): E208, D230, and H314.

As to quaternary structure, homotetramer. It depends on Zn(2+) as a cofactor.

It catalyses the reaction Preferentially, release of N-terminal lysine.. Functionally, hydrolyzes di-, tri- and tetrapeptides with a lysine as the N-terminal amino acid and with Gly, Lys, Ala, Phe or Glu in the second position. This Pyrococcus furiosus (strain ATCC 43587 / DSM 3638 / JCM 8422 / Vc1) protein is Lysyl aminopeptidase.